A 72-amino-acid polypeptide reads, in one-letter code: U-poneritoxin(01)-Om7a (72 aa).

The first 27 residues, 1–27, serve as a signal peptide directing secretion; it reads MKPSGLTFAFLVVFMMAIMYNSVQVTA. Residues 28 to 45 constitute a propeptide that is removed on maturation; sequence DADADAEAEALANALAEA.

The protein belongs to the formicidae venom precursor-01 superfamily. Expressed by the venom gland.

It is found in the secreted. Peptide with unknown function that does not resemble any other pilosulin-like peptide and appears to have a coiled coil structure. In Odontomachus monticola (Trap-jaw ant), this protein is U-poneritoxin(01)-Om7a.